The following is a 450-amino-acid chain: MGKYFGTDGVRGEANVELTPELAFKLGRFGGYVLSQHESEVPRVFVGRDTRISGEMLESALVAGLLSVGIHVYKLGVIATPGVAYLVKSEKASAGVMISASHNPALDNGIKFFGGDGYKLDDERELEIEALLDAAEDTLPRPSAEGLGDLVDYPEGLRKYQQYLVSTGLELEGMHVALDTANGAASTSARQIFADLGAQLTIIGENPDGLNINLNVGSTHPEALQEVVRESGAAIGLAFDGDSDRLIAVDENGELVDGDKIMYIIGKYLSEKGELAQNTIVTTVMSNLGFHKALDREGIQKAVTAVGDRYVVEEMRKNGYNLGGEQSGHVIIMDYNTTGDGQLSAVQLTKVMQETGKKLSELAAEVTIYPQKLVNIRVENSMKDKAMEVPAIKTVIERMEAEMAGNGRILVRPSGTEPLLRVMAEAPTDEEVNYYVDTIANVVRDEIGID.

The active-site Phosphoserine intermediate is the Ser101. Mg(2+) contacts are provided by Ser101, Asp240, Asp242, and Asp244. A Phosphoserine modification is found at Ser101.

This sequence belongs to the phosphohexose mutase family. Requires Mg(2+) as cofactor. Post-translationally, activated by phosphorylation.

It catalyses the reaction alpha-D-glucosamine 1-phosphate = D-glucosamine 6-phosphate. Its function is as follows. Catalyzes the conversion of glucosamine-6-phosphate to glucosamine-1-phosphate. The protein is Phosphoglucosamine mutase of Streptococcus sanguinis (strain SK36).